A 348-amino-acid chain; its full sequence is tRNA pseudouridine synthase D (348 aa).

Catalysis depends on Asp-78, which acts as the Nucleophile. One can recognise a TRUD domain in the interval 150-304; sequence GLPNFFGPQR…AEGTRRAARL (155 aa).

This sequence belongs to the pseudouridine synthase TruD family.

The catalysed reaction is uridine(13) in tRNA = pseudouridine(13) in tRNA. Responsible for synthesis of pseudouridine from uracil-13 in transfer RNAs. The protein is tRNA pseudouridine synthase D of Anaeromyxobacter dehalogenans (strain 2CP-1 / ATCC BAA-258).